A 335-amino-acid polypeptide reads, in one-letter code: Dihydroorotate dehydrogenase (quinone) (335 aa).

FMN is bound by residues 59 to 63 (AGLDK) and threonine 83. Substrate is bound at residue lysine 63. 108-112 (NRMGF) is a substrate binding site. 2 residues coordinate FMN: asparagine 136 and asparagine 169. Asparagine 169 contributes to the substrate binding site. Serine 172 (nucleophile) is an active-site residue. Asparagine 174 provides a ligand contact to substrate. Positions 214 and 242 each coordinate FMN. 243–244 (NT) is a substrate binding site. Residues glycine 265, glycine 294, and 315–316 (YS) contribute to the FMN site.

Belongs to the dihydroorotate dehydrogenase family. Type 2 subfamily. In terms of assembly, monomer. FMN is required as a cofactor.

It localises to the cell membrane. It carries out the reaction (S)-dihydroorotate + a quinone = orotate + a quinol. It functions in the pathway pyrimidine metabolism; UMP biosynthesis via de novo pathway; orotate from (S)-dihydroorotate (quinone route): step 1/1. Functionally, catalyzes the conversion of dihydroorotate to orotate with quinone as electron acceptor. The sequence is that of Dihydroorotate dehydrogenase (quinone) from Neisseria gonorrhoeae (strain ATCC 700825 / FA 1090).